A 108-amino-acid chain; its full sequence is Zinc finger protein 475 (108 aa).

2 C2HC/C3H-type zinc fingers span residues 6 to 35 and 79 to 108; these read PAVV…KWHN and QLVP…KAAK. The Zn(2+) site is built by C10, C13, H25, C29, C83, C86, H98, and C102.

It depends on Zn(2+) as a cofactor.

This Homo sapiens (Human) protein is Zinc finger protein 475.